The chain runs to 179 residues: Signal peptidase complex subunit 3 (179 aa).

The Cytoplasmic portion of the chain corresponds to 1 to 12 (MHTVLTRGNATV). Residues 13–33 (AYTLSVLACLTFSCFLSTVFL) form a helical; Signal-anchor for type II membrane protein membrane-spanning segment. Residues 34–179 (DYRTDANINT…FPADYATSSI (146 aa)) lie on the Lumenal side of the membrane. N-linked (GlcNAc...) asparagine glycosylation is found at asparagine 73 and asparagine 141.

Belongs to the SPCS3 family. As to quaternary structure, component of the signal peptidase complex (SPC) composed of a catalytic subunit twr/SEC11 and three accessory subunits Spase12/SPCS1, Spase25/SPCS2 and Spase22-23/SPCS3. The complex induces a local thinning of the ER membrane which is used to measure the length of the signal peptide (SP) h-region of protein substrates. This ensures the selectivity of the complex towards h-regions shorter than 18-20 amino acids.

It is found in the endoplasmic reticulum membrane. In terms of biological role, essential component of the signal peptidase complex (SPC) which catalyzes the cleavage of N-terminal signal sequences from nascent proteins as they are translocated into the lumen of the endoplasmic reticulum. Essential for the SPC catalytic activity, possibly by stabilizing and positioning the active center of the complex close to the lumenal surface. Functionally, (Microbial infection) Plays an important role in infection by flaviviruses such as West Nile virus and Dengue virus type 2. The protein is Signal peptidase complex subunit 3 (Spase22-23) of Drosophila melanogaster (Fruit fly).